A 397-amino-acid polypeptide reads, in one-letter code: Staphylopine export protein (397 aa).

12 consecutive transmembrane segments (helical) span residues 12-32, 38-58, 77-97, 102-122, 134-154, 158-178, 217-237, 239-259, 285-305, 309-329, 337-357, and 363-383; these read LYILTLMFFSANAILNVFIPL, GATNTVIGIVMGAYMLTAMVF, IILIINAIALIIYGFTGLEGY, VMQGVCTAFFSMSLQLGIIDA, LYSLFSTIPNLIGPLVAVGIW, NISLFAIVIIFIALTTTFFGY, GIIMIVASIVFGAVSTFVPLY, VSLGFANAGIFLTIQAIAVVA, LLVIASFVVAFGPQVGAIIFY, ILIGMTQAMVYPTLTSYLSFV, MLLGLFIACADLGISLGGALM, and LVGFKWMYLICGMLVIVIMIM.

It belongs to the major facilitator superfamily.

The protein resides in the cell membrane. Its function is as follows. Involved in the export of the metallophore staphylopine. The protein is Staphylopine export protein of Staphylococcus aureus (strain Mu50 / ATCC 700699).